The primary structure comprises 275 residues: Bis(5'-nucleosyl)-tetraphosphatase, symmetrical (275 aa).

Belongs to the Ap4A hydrolase family.

It carries out the reaction P(1),P(4)-bis(5'-adenosyl) tetraphosphate + H2O = 2 ADP + 2 H(+). In terms of biological role, hydrolyzes diadenosine 5',5'''-P1,P4-tetraphosphate to yield ADP. The sequence is that of Bis(5'-nucleosyl)-tetraphosphatase, symmetrical from Hamiltonella defensa subsp. Acyrthosiphon pisum (strain 5AT).